We begin with the raw amino-acid sequence, 247 residues long: 2,3-bisphosphoglycerate-dependent phosphoglycerate mutase (247 aa).

Residues 8 to 15 (RHGESQWN), 21 to 22 (TG), Arg-60, 87 to 90 (ERHY), Lys-98, 114 to 115 (RR), and 183 to 184 (GN) contribute to the substrate site. The active-site Tele-phosphohistidine intermediate is the His-9. Glu-87 functions as the Proton donor/acceptor in the catalytic mechanism.

Belongs to the phosphoglycerate mutase family. BPG-dependent PGAM subfamily.

The enzyme catalyses (2R)-2-phosphoglycerate = (2R)-3-phosphoglycerate. The protein operates within carbohydrate degradation; glycolysis; pyruvate from D-glyceraldehyde 3-phosphate: step 3/5. In terms of biological role, catalyzes the interconversion of 2-phosphoglycerate and 3-phosphoglycerate. The polypeptide is 2,3-bisphosphoglycerate-dependent phosphoglycerate mutase (Chlorobaculum parvum (strain DSM 263 / NCIMB 8327) (Chlorobium vibrioforme subsp. thiosulfatophilum)).